The primary structure comprises 447 residues: UDP-N-acetylmuramate--L-alanine ligase (447 aa).

108 to 114 (GSHGKTS) contributes to the ATP binding site.

The protein belongs to the MurCDEF family.

It localises to the cytoplasm. It catalyses the reaction UDP-N-acetyl-alpha-D-muramate + L-alanine + ATP = UDP-N-acetyl-alpha-D-muramoyl-L-alanine + ADP + phosphate + H(+). It functions in the pathway cell wall biogenesis; peptidoglycan biosynthesis. Functionally, cell wall formation. The sequence is that of UDP-N-acetylmuramate--L-alanine ligase from Listeria monocytogenes serotype 4a (strain HCC23).